We begin with the raw amino-acid sequence, 301 residues long: Porphobilinogen deaminase (301 aa).

An S-(dipyrrolylmethanemethyl)cysteine modification is found at Cys242.

This sequence belongs to the HMBS family. Monomer. Dipyrromethane serves as cofactor.

The catalysed reaction is 4 porphobilinogen + H2O = hydroxymethylbilane + 4 NH4(+). It participates in porphyrin-containing compound metabolism; protoporphyrin-IX biosynthesis; coproporphyrinogen-III from 5-aminolevulinate: step 2/4. Tetrapolymerization of the monopyrrole PBG into the hydroxymethylbilane pre-uroporphyrinogen in several discrete steps. The polypeptide is Porphobilinogen deaminase (Rickettsia akari (strain Hartford)).